A 187-amino-acid polypeptide reads, in one-letter code: Ubiquinone biosynthesis protein COQ4 homolog, mitochondrial (187 aa).

Residues histidine 77, aspartate 78, histidine 81, and glutamate 93 each coordinate Zn(2+).

This sequence belongs to the COQ4 family. In terms of assembly, component of a multi-subunit COQ enzyme complex. Zn(2+) is required as a cofactor.

It is found in the mitochondrion inner membrane. It carries out the reaction a 4-hydroxy-3-methoxy-5-(all-trans-polyprenyl)benzoate + H(+) = a 2-methoxy-6-(all-trans-polyprenyl)phenol + CO2. Its pathway is cofactor biosynthesis; ubiquinone biosynthesis. Functionally, lyase that catalyzes the C1-decarboxylation of 4-hydroxy-3-methoxy-5-(all-trans-polyprenyl)benzoic acid into 2-methoxy-6-(all-trans-polyprenyl)phenol during ubiquinone biosynthesis. The protein is Ubiquinone biosynthesis protein COQ4 homolog, mitochondrial of Leishmania major.